The sequence spans 315 residues: Small ribosomal subunit biogenesis GTPase RsgA (315 aa).

The CP-type G domain maps to 80-241 (LSKQTHIIAS…IIDTPGIKGF (162 aa)). GTP-binding positions include 129 to 132 (NKVD) and 183 to 191 (GHSGTGKST). Residues Cys265, Cys270, His272, and Cys278 each coordinate Zn(2+).

This sequence belongs to the TRAFAC class YlqF/YawG GTPase family. RsgA subfamily. Monomer. Associates with 30S ribosomal subunit, binds 16S rRNA. Zn(2+) is required as a cofactor.

It localises to the cytoplasm. Functionally, one of several proteins that assist in the late maturation steps of the functional core of the 30S ribosomal subunit. Helps release RbfA from mature subunits. May play a role in the assembly of ribosomal proteins into the subunit. Circularly permuted GTPase that catalyzes slow GTP hydrolysis, GTPase activity is stimulated by the 30S ribosomal subunit. This is Small ribosomal subunit biogenesis GTPase RsgA from Christiangramia forsetii (strain DSM 17595 / CGMCC 1.15422 / KT0803) (Gramella forsetii).